We begin with the raw amino-acid sequence, 433 residues long: Trigger factor (433 aa).

The PPIase FKBP-type domain occupies 161-246 (GDRVTMDFVG…AKKVEARDLP (86 aa)).

This sequence belongs to the FKBP-type PPIase family. Tig subfamily.

The protein localises to the cytoplasm. The enzyme catalyses [protein]-peptidylproline (omega=180) = [protein]-peptidylproline (omega=0). Involved in protein export. Acts as a chaperone by maintaining the newly synthesized protein in an open conformation. Functions as a peptidyl-prolyl cis-trans isomerase. This Idiomarina loihiensis (strain ATCC BAA-735 / DSM 15497 / L2-TR) protein is Trigger factor.